Reading from the N-terminus, the 400-residue chain is Dual specificity mitogen-activated protein kinase kinase 2 (400 aa).

N-acetylmethionine is present on M1. A Phosphoserine modification is found at S23. The Protein kinase domain maps to 72–369 (FERISELGAG…LKMLMSHTFI (298 aa)). ATP contacts are provided by residues 78 to 86 (LGAGNGGVV) and K101. Catalysis depends on D194, which acts as the Proton acceptor. At S222 the chain carries Phosphoserine; by RAF. 4 positions are modified to phosphoserine: S226, S293, S295, and S306. The segment at 288-309 (EGEPHSISPRPRPPGRPISGHG) is disordered. 2 positions are modified to phosphothreonine: T394 and T396.

Belongs to the protein kinase superfamily. STE Ser/Thr protein kinase family. MAP kinase kinase subfamily. Interacts with MORG1. Interacts with SGK1. Interacts with KSR1. Interacts with KSR1 and BRAF; the interaction with KSR1 mediates KSR1-BRAF dimerization. Interacts with GLS. Requires Mg(2+) as cofactor. Post-translationally, MAPKK is itself dependent on Ser/Thr phosphorylation for activity catalyzed by MAP kinase kinase kinases (RAF or MEKK1).

Its subcellular location is the cytoplasm. The protein resides in the membrane. The catalysed reaction is L-seryl-[protein] + ATP = O-phospho-L-seryl-[protein] + ADP + H(+). The enzyme catalyses L-threonyl-[protein] + ATP = O-phospho-L-threonyl-[protein] + ADP + H(+). It carries out the reaction L-tyrosyl-[protein] + ATP = O-phospho-L-tyrosyl-[protein] + ADP + H(+). Functionally, catalyzes the concomitant phosphorylation of a threonine and a tyrosine residue in a Thr-Glu-Tyr sequence located in MAP kinases. Activates the ERK1 and ERK2 MAP kinases. Activates BRAF in a KSR1 or KSR2-dependent manner; by binding to KSR1 or KSR2 releases the inhibitory intramolecular interaction between KSR1 or KSR2 protein kinase and N-terminal domains which promotes KSR1 or KSR2-BRAF dimerization and BRAF activation. In Canis lupus familiaris (Dog), this protein is Dual specificity mitogen-activated protein kinase kinase 2 (MAP2K2).